Here is a 542-residue protein sequence, read N- to C-terminus: Dihydropyrimidinase (542 aa).

Zn(2+) is bound by residues His-62, His-64, and Lys-167. Lys-167 carries the N6-carboxylysine modification. Tyr-172 is a substrate binding site. Residues His-199 and His-255 each contribute to the Zn(2+) site. Ser-331 contacts substrate. Asp-358 is a Zn(2+) binding site. Asn-392 is a substrate binding site.

The protein belongs to the metallo-dependent hydrolases superfamily. Hydantoinase/dihydropyrimidinase family. As to quaternary structure, homotetramer. Zn(2+) serves as cofactor. In terms of processing, carboxylation allows a single lysine to coordinate two zinc ions.

It catalyses the reaction 5,6-dihydrouracil + H2O = 3-(carbamoylamino)propanoate + H(+). In terms of biological role, catalyzes the second step of the reductive pyrimidine degradation, the reversible hydrolytic ring opening of dihydropyrimidines. Can catalyze the ring opening of 5,6-dihydrouracil to N-carbamyl-alanine and of 5,6-dihydrothymine to N-carbamyl-amino isobutyrate. The sequence is that of Dihydropyrimidinase (PYD2) from Lachancea kluyveri (strain ATCC 58438 / CBS 3082 / BCRC 21498 / NBRC 1685 / JCM 7257 / NCYC 543 / NRRL Y-12651) (Yeast).